Consider the following 443-residue polypeptide: Trigger factor (443 aa).

The PPIase FKBP-type domain occupies 163–248; the sequence is GDTAVIDFEG…INEIKAKELP (86 aa).

It belongs to the FKBP-type PPIase family. Tig subfamily.

The protein resides in the cytoplasm. The catalysed reaction is [protein]-peptidylproline (omega=180) = [protein]-peptidylproline (omega=0). Involved in protein export. Acts as a chaperone by maintaining the newly synthesized protein in an open conformation. Functions as a peptidyl-prolyl cis-trans isomerase. The protein is Trigger factor of Agathobacter rectalis (strain ATCC 33656 / DSM 3377 / JCM 17463 / KCTC 5835 / VPI 0990) (Eubacterium rectale).